A 184-amino-acid chain; its full sequence is ADP-ribosylation factor-like protein 2 (184 aa).

Residue G2 is the site of N-myristoyl glycine attachment. 23 to 30 (GLDNAGKT) is a GTP binding site. S45 is modified (phosphoserine). Residues 66 to 70 (DVGGQ) and G68 each bind GTP. A Glycyl lysine isopeptide (Lys-Gly) (interchain with G-Cter in ubiquitin) cross-link involves residue K71. Residue 125-128 (NKQD) participates in GTP binding.

Belongs to the small GTPase superfamily. Arf family. As to quaternary structure, found in a complex with ARL2, ARL2BP and SLC25A6. Found in a complex with at least ARL2, PPP2CB, PPP2R1A, PPP2R2A, PPP2R5E and TBCD. Interacts with ELMOD2. The GTP-bound form interacts with ARL2BP. The GDP-bound form interacts preferentially with TBCD. Interacts with UNC119. Found in a complex with ARL2, ARL2BP and SLC25A4. The GTP-bound form interacts with PDE6D. Post-translationally, not N-myristoylated. Expressed in brain, retina, lung, cerebellum, liver, kidney, hippocampus, spleen, cortex and heart (at protein level).

The protein localises to the mitochondrion intermembrane space. It localises to the cytoplasm. Its subcellular location is the cytoskeleton. It is found in the microtubule organizing center. The protein resides in the centrosome. The protein localises to the nucleus. Its function is as follows. Small GTP-binding protein which cycles between an inactive GDP-bound and an active GTP-bound form, and the rate of cycling is regulated by guanine nucleotide exchange factors (GEF) and GTPase-activating proteins (GAP). GTP-binding protein that does not act as an allosteric activator of the cholera toxin catalytic subunit. Regulates formation of new microtubules and centrosome integrity. Prevents the TBCD-induced microtubule destruction. Participates in association with TBCD, in the disassembly of the apical junction complexes. Antagonizes the effect of TBCD on epithelial cell detachment and tight and adherens junctions disassembly. Together with ARL2, plays a role in the nuclear translocation, retention and transcriptional activity of STAT3. Component of a regulated secretory pathway involved in Ca(2+)-dependent release of acetylcholine. Required for normal progress through the cell cycle. This is ADP-ribosylation factor-like protein 2 (Arl2) from Rattus norvegicus (Rat).